Here is a 47-residue protein sequence, read N- to C-terminus: Large ribosomal subunit protein eL40 (47 aa).

The protein belongs to the eukaryotic ribosomal protein eL40 family.

This chain is Large ribosomal subunit protein eL40, found in Methanococcus vannielii (strain ATCC 35089 / DSM 1224 / JCM 13029 / OCM 148 / SB).